The chain runs to 137 residues: Ribonuclease P protein component (137 aa).

The protein belongs to the RnpA family. As to quaternary structure, consists of a catalytic RNA component (M1 or rnpB) and a protein subunit.

The catalysed reaction is Endonucleolytic cleavage of RNA, removing 5'-extranucleotides from tRNA precursor.. Its function is as follows. RNaseP catalyzes the removal of the 5'-leader sequence from pre-tRNA to produce the mature 5'-terminus. It can also cleave other RNA substrates such as 4.5S RNA. The protein component plays an auxiliary but essential role in vivo by binding to the 5'-leader sequence and broadening the substrate specificity of the ribozyme. This chain is Ribonuclease P protein component, found in Porphyromonas gingivalis (strain ATCC BAA-308 / W83).